Here is a 255-residue protein sequence, read N- to C-terminus: Type III pantothenate kinase (255 aa).

6–13 is an ATP binding site; that stretch reads DIGNTNTV. Substrate-binding positions include tyrosine 100 and 107–110; that span reads GADR. Aspartate 109 acts as the Proton acceptor in catalysis. K(+) is bound at residue aspartate 129. Threonine 132 serves as a coordination point for ATP. Threonine 185 lines the substrate pocket.

Belongs to the type III pantothenate kinase family. As to quaternary structure, homodimer. NH4(+) is required as a cofactor. It depends on K(+) as a cofactor.

It is found in the cytoplasm. It carries out the reaction (R)-pantothenate + ATP = (R)-4'-phosphopantothenate + ADP + H(+). The protein operates within cofactor biosynthesis; coenzyme A biosynthesis; CoA from (R)-pantothenate: step 1/5. Its function is as follows. Catalyzes the phosphorylation of pantothenate (Pan), the first step in CoA biosynthesis. The protein is Type III pantothenate kinase of Desulfosudis oleivorans (strain DSM 6200 / JCM 39069 / Hxd3) (Desulfococcus oleovorans).